The sequence spans 272 residues: MANSDKRLFEKVAIITGGARGIGAATARLFTENGAYVIVADILENEGILVAESIGGCYVHCDVSKEADVEAAVELAMRRKGRLDVMFNNAGMSLNEGSIMGMDVDMVNKLVSVNVNGVLHGIKHAAKAMIKGGRGGSIICTSSSSGLMGGLGGHAYTLSKGAINGVVRTTACELGSHGIRVNSISPHGVPTDILVNAYRKFLNHDKLNVAEVTDIIAEKGSLLTGRAGTVEDVAQAALFLASQESSGFITGHNLVVDGGYTSATSTMRFIYN.

14–38 (IITGGARGIGAATARLFTENGAYVI) serves as a coordination point for NADP(+). S143 lines the substrate pocket. Y156 serves as the catalytic Proton acceptor. K160 is an NADP(+) binding site.

This sequence belongs to the short-chain dehydrogenases/reductases (SDR) family. In terms of tissue distribution, expressed specifically in tapetal cells.

Functionally, may play a role in tapetum development. This is Short-chain dehydrogenase reductase ATA1 from Arabidopsis thaliana (Mouse-ear cress).